An 822-amino-acid polypeptide reads, in one-letter code: Glycerol-3-phosphate acyltransferase (822 aa).

Positions 306–311 (CHRSHM) match the HXXXXD motif motif. The interval 803–822 (ASSSAEMEAESQAVEETTQE) is disordered.

Belongs to the GPAT/DAPAT family.

The protein localises to the cell inner membrane. The catalysed reaction is sn-glycerol 3-phosphate + an acyl-CoA = a 1-acyl-sn-glycero-3-phosphate + CoA. Its pathway is phospholipid metabolism; CDP-diacylglycerol biosynthesis; CDP-diacylglycerol from sn-glycerol 3-phosphate: step 1/3. This is Glycerol-3-phosphate acyltransferase from Pectobacterium carotovorum subsp. carotovorum (strain PC1).